A 210-amino-acid chain; its full sequence is MTTKGILGRKVGMTQVFTENGELIPVTVIAATPNVVLQVKTNETDGYEAIQVGFEDKREVLSNKPAKGHVAKANTTPKRFIREFRDVALGDYEVGTEIKVDTFAAGDVVDVTGVTKGHGFQGNIKKDGQSRGPMGHGSRYHRRPGSMGAVINRVFKGKLLPGRMGNNQRTVQNLVVVSTDVEKNVILVKGNVPGAKNSMVTIKTAVKAHK.

The segment at 120–143 (FQGNIKKDGQSRGPMGHGSRYHRR) is disordered.

The protein belongs to the universal ribosomal protein uL3 family. In terms of assembly, part of the 50S ribosomal subunit. Forms a cluster with proteins L14 and L19.

In terms of biological role, one of the primary rRNA binding proteins, it binds directly near the 3'-end of the 23S rRNA, where it nucleates assembly of the 50S subunit. This Latilactobacillus sakei subsp. sakei (strain 23K) (Lactobacillus sakei subsp. sakei) protein is Large ribosomal subunit protein uL3.